Reading from the N-terminus, the 109-residue chain is MLMNRFVLKRVRQGKPLNKPRLSIFCSHKHIYAQIIDDMVGRTLVSASTYHYKQGWHSTMKDAQEVGQKLAQQALEKGIQQVVLDRGSYRYHGKIRALAEAARKEGLKI.

This sequence belongs to the universal ribosomal protein uL18 family. As to quaternary structure, part of the 50S ribosomal subunit; contacts the 5S rRNA.

It is found in the plastid. Its subcellular location is the chloroplast. Functionally, binds 5S rRNA, forms part of the central protuberance of the 50S subunit. This Cyanidioschyzon merolae (strain NIES-3377 / 10D) (Unicellular red alga) protein is Large ribosomal subunit protein uL18c (rpl18).